The sequence spans 640 residues: 1-deoxy-D-xylulose-5-phosphate synthase (640 aa).

Thiamine diphosphate is bound by residues His79 and 120 to 122; that span reads AHS. Asp151 is a binding site for Mg(2+). Residues 152–153, Asn180, Tyr289, and Glu371 contribute to the thiamine diphosphate site; that span reads GA. Residue Asn180 coordinates Mg(2+).

It belongs to the transketolase family. DXPS subfamily. As to quaternary structure, homodimer. Mg(2+) serves as cofactor. It depends on thiamine diphosphate as a cofactor.

It catalyses the reaction D-glyceraldehyde 3-phosphate + pyruvate + H(+) = 1-deoxy-D-xylulose 5-phosphate + CO2. The protein operates within metabolic intermediate biosynthesis; 1-deoxy-D-xylulose 5-phosphate biosynthesis; 1-deoxy-D-xylulose 5-phosphate from D-glyceraldehyde 3-phosphate and pyruvate: step 1/1. In terms of biological role, catalyzes the acyloin condensation reaction between C atoms 2 and 3 of pyruvate and glyceraldehyde 3-phosphate to yield 1-deoxy-D-xylulose-5-phosphate (DXP). This Novosphingobium aromaticivorans (strain ATCC 700278 / DSM 12444 / CCUG 56034 / CIP 105152 / NBRC 16084 / F199) protein is 1-deoxy-D-xylulose-5-phosphate synthase.